The primary structure comprises 200 residues: Small ribosomal subunit protein uS4 (200 aa).

The disordered stretch occupies residues Thr-22–Lys-42. The S4 RNA-binding domain maps to Thr-92 to Val-155.

The protein belongs to the universal ribosomal protein uS4 family. In terms of assembly, part of the 30S ribosomal subunit. Contacts protein S5. The interaction surface between S4 and S5 is involved in control of translational fidelity.

One of the primary rRNA binding proteins, it binds directly to 16S rRNA where it nucleates assembly of the body of the 30S subunit. Its function is as follows. With S5 and S12 plays an important role in translational accuracy. This chain is Small ribosomal subunit protein uS4, found in Bacillus pumilus (strain SAFR-032).